We begin with the raw amino-acid sequence, 286 residues long: Digeranylgeranylglyceryl phosphate synthase (286 aa).

Helical transmembrane passes span alanine 21–threonine 41, threonine 42–isoleucine 62, phenylalanine 96–alanine 116, leucine 133–alanine 155, phenylalanine 162–isoleucine 181, valine 214–tryptophan 234, tyrosine 235–aspartate 255, and arginine 266–isoleucine 286.

Belongs to the UbiA prenyltransferase family. DGGGP synthase subfamily. Mg(2+) is required as a cofactor.

The protein localises to the cell membrane. The catalysed reaction is sn-3-O-(geranylgeranyl)glycerol 1-phosphate + (2E,6E,10E)-geranylgeranyl diphosphate = 2,3-bis-O-(geranylgeranyl)-sn-glycerol 1-phosphate + diphosphate. It functions in the pathway membrane lipid metabolism; glycerophospholipid metabolism. Prenyltransferase that catalyzes the transfer of the geranylgeranyl moiety of geranylgeranyl diphosphate (GGPP) to the C2 hydroxyl of (S)-3-O-geranylgeranylglyceryl phosphate (GGGP). This reaction is the second ether-bond-formation step in the biosynthesis of archaeal membrane lipids. The polypeptide is Digeranylgeranylglyceryl phosphate synthase (Haloquadratum walsbyi (strain DSM 16790 / HBSQ001)).